We begin with the raw amino-acid sequence, 350 residues long: Nicotinate-nucleotide--dimethylbenzimidazole phosphoribosyltransferase (350 aa).

The active-site Proton acceptor is the E317.

It belongs to the CobT family.

It catalyses the reaction 5,6-dimethylbenzimidazole + nicotinate beta-D-ribonucleotide = alpha-ribazole 5'-phosphate + nicotinate + H(+). Its pathway is nucleoside biosynthesis; alpha-ribazole biosynthesis; alpha-ribazole from 5,6-dimethylbenzimidazole: step 1/2. Its function is as follows. Catalyzes the synthesis of alpha-ribazole-5'-phosphate from nicotinate mononucleotide (NAMN) and 5,6-dimethylbenzimidazole (DMB). The sequence is that of Nicotinate-nucleotide--dimethylbenzimidazole phosphoribosyltransferase from Shewanella sp. (strain ANA-3).